We begin with the raw amino-acid sequence, 408 residues long: Prenyltransferase criF (408 aa).

Dimethylallyl diphosphate-binding residues include R94, K181, Y183, R248, K250, Y252, Q334, Y336, Y400, and Y404.

This sequence belongs to the tryptophan dimethylallyltransferase family. Homodimer.

The catalysed reaction is preechinulin + dimethylallyl diphosphate = tardioxopiperazine B + diphosphate. The enzyme catalyses preechinulin + dimethylallyl diphosphate = tardioxopiperazine A + diphosphate. It carries out the reaction tardioxopiperazine A + dimethylallyl diphosphate = echinulin + diphosphate. It catalyses the reaction tardioxopiperazine A + dimethylallyl diphosphate = variecolorin L + diphosphate. The catalysed reaction is neoechinulin A + dimethylallyl diphosphate = variecolorin G + diphosphate. The enzyme catalyses neoechinulin A + dimethylallyl diphosphate = isoechinulin A + diphosphate. It carries out the reaction isoechinulin A + dimethylallyl diphosphate = dehydroechinulin + diphosphate. It catalyses the reaction neoechinulin B + dimethylallyl diphosphate = isoechinulin B + diphosphate. It functions in the pathway secondary metabolite biosynthesis. It participates in alkaloid biosynthesis. Its function is as follows. Prenyltransferase; part of the gene cluster that mediates the biosynthesis of echinulin family alkaloid. The pathway begins with the biosynthesis of the cyclic dipeptide cyclo-L-Trp-L-Ala (cyclo-TA) by the NRPS criC via condensation of L-alanine and L-tryptophan. The prenyltransferase criA then catalyzes the first prenylation step, a reverse prenylation reaction at C2, to yield preechinulin. Preechinulin is the substrate of the cytochrome P450 monooxygenase criE that catalyzes the formation of the double bond between C10 and C11 to produce neoechulin A. The unique prenyltransferase criF functions as a competitive enzyme with criE for preechinulin metabolization and uses preechinulin for effective regiospecific prenylations. Preechinulin is prenylated by criF at C5 or C7. C7-prenylation leads to accumulation of tardioxopiperazine B without further modification by criF. In contrast, the C5-prenylated tardioxopiperazine A can be prenylated again by criF, predominantly at C7 to form echinulin or less frequently at C4 to give variecolorin L. CriF also accepts neoechilunin A to produce varlecolorin G (prenylation at C5) or isoechinulin A (prenylation at C7). CriF further converts isoechinulin A into dehydroechinulin. Moreover, a yet unidentified enzyme can also convert neoechilunin A into neoechilunin B by introducing a double bond between positions C14 and C17 and thus provides a further substrate to criF for C5 and C7 prenylation. The chain is Prenyltransferase criF from Aspergillus cristatus (Chinese Fuzhuan brick tea-fermentation fungus).